Reading from the N-terminus, the 327-residue chain is Delta-aminolevulinic acid dehydratase (327 aa).

3 residues coordinate Zn(2+): cysteine 119, cysteine 121, and cysteine 129. The Schiff-base intermediate with substrate role is filled by lysine 198. 5-aminolevulinate is bound by residues arginine 208 and arginine 220. Glutamate 236 contributes to the Mg(2+) binding site. Residue lysine 251 is the Schiff-base intermediate with substrate of the active site. Residues serine 277 and tyrosine 316 each coordinate 5-aminolevulinate.

Belongs to the ALAD family. Homooctamer. Requires Zn(2+) as cofactor.

It carries out the reaction 2 5-aminolevulinate = porphobilinogen + 2 H2O + H(+). Its pathway is porphyrin-containing compound metabolism; protoporphyrin-IX biosynthesis; coproporphyrinogen-III from 5-aminolevulinate: step 1/4. Its function is as follows. Catalyzes an early step in the biosynthesis of tetrapyrroles. Binds two molecules of 5-aminolevulinate per subunit, each at a distinct site, and catalyzes their condensation to form porphobilinogen. The chain is Delta-aminolevulinic acid dehydratase (hemB) from Synechocystis sp. (strain ATCC 27184 / PCC 6803 / Kazusa).